The following is a 434-amino-acid chain: Glutamate/glutamine/aspartate/asparagine transport system permease protein BztC (434 aa).

The next 10 helical transmembrane spans lie at 41-61 (LTVFGLLATVWLVQAAAPWLL), 113-133 (LFVTFAGLFLALAPVLFDALP), 135-155 (KLIWGTLLYPLAAFWLLWGGP), 156-176 (IWGPVSVLAGFAILGLLFTAL), 180-200 (LGVPVSAGIGLVVAALFWLYA), 227-247 (FLLALVIGVTAIVVSLPLGIL), 272-292 (GVPLITLLFTASLLLQYFLPP), 298-318 (LILRVVILVTLFAAAYIAEVI), 360-380 (IVSSFIGLFKDTTLVAFVGLF), and 398-418 (GTYWEPYIFVALIFFLFNFSM). One can recognise an ABC transmembrane type-1 domain in the interval 227 to 422 (FLLALVIGVT…LFNFSMSRYS (196 aa)).

It belongs to the binding-protein-dependent transport system permease family. HisMQ subfamily. As to quaternary structure, bztB and BztC form a heterodimer which can form a membrane complex with a homodimer of BztD.

The protein resides in the cell inner membrane. Part of a binding-protein-dependent transport system for glutamate, glutamine, aspartate and asparagine. Probably responsible for the translocation of the substrate across the membrane. The polypeptide is Glutamate/glutamine/aspartate/asparagine transport system permease protein BztC (bztC) (Rhodobacter capsulatus (strain ATCC BAA-309 / NBRC 16581 / SB1003)).